The sequence spans 103 residues: Small ribosomal subunit protein eS25 (103 aa).

The interval 1–23 (MGGEDMAKKKAPSAKEGEKQQGF) is disordered.

This sequence belongs to the eukaryotic ribosomal protein eS25 family.

The chain is Small ribosomal subunit protein eS25 (rps25e) from Aeropyrum pernix (strain ATCC 700893 / DSM 11879 / JCM 9820 / NBRC 100138 / K1).